The primary structure comprises 367 residues: Phosphoribosylaminoimidazole-succinocarboxamide synthase (367 aa).

It belongs to the SAICAR synthetase family.

The catalysed reaction is 5-amino-1-(5-phospho-D-ribosyl)imidazole-4-carboxylate + L-aspartate + ATP = (2S)-2-[5-amino-1-(5-phospho-beta-D-ribosyl)imidazole-4-carboxamido]succinate + ADP + phosphate + 2 H(+). The protein operates within purine metabolism; IMP biosynthesis via de novo pathway; 5-amino-1-(5-phospho-D-ribosyl)imidazole-4-carboxamide from 5-amino-1-(5-phospho-D-ribosyl)imidazole-4-carboxylate: step 1/2. The sequence is that of Phosphoribosylaminoimidazole-succinocarboxamide synthase from Shewanella sp. (strain ANA-3).